The primary structure comprises 299 residues: Zeta-sarcoglycan (299 aa).

Residues 1–37 are Cytoplasmic-facing; it reads MTREQYILATQQNNLPRTENAQLYPVGIYGWRKRCLY. Residues 38–58 traverse the membrane as a helical; Signal-anchor for type II membrane protein segment; that stretch reads FFVLLLLVTMIVNLAMTIWIL. Topologically, residues 59–299 are extracellular; the sequence is KVMNFTVDGM…QSSSNICLWS (241 aa). 2 N-linked (GlcNAc...) asparagine glycosylation sites follow: Asn62 and Asn110. A disulfide bridge connects residues Cys273 and Cys289.

It belongs to the sarcoglycan beta/delta/gamma/zeta family.

The protein resides in the cell membrane. It is found in the sarcolemma. The protein localises to the cytoplasm. It localises to the cytoskeleton. Component of the sarcoglycan complex, a subcomplex of the dystrophin-glycoprotein complex which forms a link between the F-actin cytoskeleton and the extracellular matrix. May play a role in the maintenance of striated muscle membrane stability. The sequence is that of Zeta-sarcoglycan (SGCZ) from Homo sapiens (Human).